The chain runs to 698 residues: Polyribonucleotide nucleotidyltransferase (698 aa).

Mg(2+)-binding residues include D485 and D491. The 61-residue stretch at 552-612 folds into the KH domain; it reads PRVEMMTIPE…SDLKGAKSIV (61 aa). An S1 motif domain is found at 622-690; it reads GMVYDGTVKK…KLGRLNLSYV (69 aa).

It belongs to the polyribonucleotide nucleotidyltransferase family. Mg(2+) serves as cofactor.

Its subcellular location is the cytoplasm. The enzyme catalyses RNA(n+1) + phosphate = RNA(n) + a ribonucleoside 5'-diphosphate. Involved in mRNA degradation. Catalyzes the phosphorolysis of single-stranded polyribonucleotides processively in the 3'- to 5'-direction. This is Polyribonucleotide nucleotidyltransferase from Treponema denticola (strain ATCC 35405 / DSM 14222 / CIP 103919 / JCM 8153 / KCTC 15104).